Consider the following 480-residue polypeptide: Siroheme synthase 1 (480 aa).

The interval 1-203 is precorrin-2 dehydrogenase /sirohydrochlorin ferrochelatase; it reads MNYLPIFADL…GQLEQAEGEL (203 aa). Residues 22–23 and 43–44 each bind NAD(+); these read EV and LA. At serine 128 the chain carries Phosphoserine. The tract at residues 222–480 is uroporphyrinogen-III C-methyltransferase; the sequence is GEVALVGAGP…DSRPAVVNLA (259 aa). An S-adenosyl-L-methionine-binding site is contributed by proline 231. Aspartate 254 serves as the catalytic Proton acceptor. Lysine 276 functions as the Proton donor in the catalytic mechanism. Residues 307 to 309, isoleucine 312, 337 to 338, methionine 389, and glycine 418 each bind S-adenosyl-L-methionine; these read GGD and TA.

This sequence in the N-terminal section; belongs to the precorrin-2 dehydrogenase / sirohydrochlorin ferrochelatase family. It in the C-terminal section; belongs to the precorrin methyltransferase family.

It carries out the reaction uroporphyrinogen III + 2 S-adenosyl-L-methionine = precorrin-2 + 2 S-adenosyl-L-homocysteine + H(+). The catalysed reaction is precorrin-2 + NAD(+) = sirohydrochlorin + NADH + 2 H(+). It catalyses the reaction siroheme + 2 H(+) = sirohydrochlorin + Fe(2+). It functions in the pathway cofactor biosynthesis; adenosylcobalamin biosynthesis; precorrin-2 from uroporphyrinogen III: step 1/1. It participates in cofactor biosynthesis; adenosylcobalamin biosynthesis; sirohydrochlorin from precorrin-2: step 1/1. Its pathway is porphyrin-containing compound metabolism; siroheme biosynthesis; precorrin-2 from uroporphyrinogen III: step 1/1. The protein operates within porphyrin-containing compound metabolism; siroheme biosynthesis; siroheme from sirohydrochlorin: step 1/1. It functions in the pathway porphyrin-containing compound metabolism; siroheme biosynthesis; sirohydrochlorin from precorrin-2: step 1/1. In terms of biological role, multifunctional enzyme that catalyzes the SAM-dependent methylations of uroporphyrinogen III at position C-2 and C-7 to form precorrin-2 via precorrin-1. Then it catalyzes the NAD-dependent ring dehydrogenation of precorrin-2 to yield sirohydrochlorin. Finally, it catalyzes the ferrochelation of sirohydrochlorin to yield siroheme. This Pectobacterium atrosepticum (strain SCRI 1043 / ATCC BAA-672) (Erwinia carotovora subsp. atroseptica) protein is Siroheme synthase 1.